Here is a 186-residue protein sequence, read N- to C-terminus: Bilin biosynthesis protein CpeZ (186 aa).

In terms of biological role, involved in the biosynthesis of bilin. This is Bilin biosynthesis protein CpeZ (cpeZ) from Synechococcus sp. (strain WH8020).